The following is a 323-amino-acid chain: Malate dehydrogenase (323 aa).

NAD(+)-binding positions include 20-25 and Asp-44; that span reads GAGRVG. Residues Arg-93 and Arg-99 each contribute to the substrate site. NAD(+)-binding positions include Asn-106 and 129–131; that span reads VTN. The substrate site is built by Asn-131 and Arg-162. Catalysis depends on His-186, which acts as the Proton acceptor.

The protein belongs to the LDH/MDH superfamily. MDH type 3 family.

It carries out the reaction (S)-malate + NAD(+) = oxaloacetate + NADH + H(+). In terms of biological role, catalyzes the reversible oxidation of malate to oxaloacetate. The sequence is that of Malate dehydrogenase from Nostoc sp. (strain PCC 7120 / SAG 25.82 / UTEX 2576).